The primary structure comprises 652 residues: tRNA 5-methylaminomethyl-2-thiouridine biosynthesis bifunctional protein MnmC (652 aa).

The tRNA (mnm(5)s(2)U34)-methyltransferase stretch occupies residues 1 to 227; sequence MLSWKNDLTP…KREMLTGKYS (227 aa). Residues 259-652 form an FAD-dependent cmnm(5)s(2)U34 oxidoreductase region; that stretch reads IGAGIAGSTL…ARFLYRRIRK (394 aa).

It in the N-terminal section; belongs to the methyltransferase superfamily. tRNA (mnm(5)s(2)U34)-methyltransferase family. The protein in the C-terminal section; belongs to the DAO family. It depends on FAD as a cofactor.

Its subcellular location is the cytoplasm. It carries out the reaction 5-aminomethyl-2-thiouridine(34) in tRNA + S-adenosyl-L-methionine = 5-methylaminomethyl-2-thiouridine(34) in tRNA + S-adenosyl-L-homocysteine + H(+). Catalyzes the last two steps in the biosynthesis of 5-methylaminomethyl-2-thiouridine (mnm(5)s(2)U) at the wobble position (U34) in tRNA. Catalyzes the FAD-dependent demodification of cmnm(5)s(2)U34 to nm(5)s(2)U34, followed by the transfer of a methyl group from S-adenosyl-L-methionine to nm(5)s(2)U34, to form mnm(5)s(2)U34. This chain is tRNA 5-methylaminomethyl-2-thiouridine biosynthesis bifunctional protein MnmC, found in Leptospira borgpetersenii serovar Hardjo-bovis (strain JB197).